The primary structure comprises 503 residues: Probable zinc metalloprotease UREG_01421 (503 aa).

Residues 1–24 form the signal peptide; the sequence is MHSLSSALAGSTFVLLFLCLLASA. N-linked (GlcNAc...) asparagine glycosylation is present at Asn105. Positions 176, 196, and 232 each coordinate Zn(2+). A glycan (N-linked (GlcNAc...) asparagine) is linked at Asn247. Residue Asp259 coordinates Zn(2+). In terms of domain architecture, Fibronectin type-III spans 416 to 503; that stretch reads MPRNVRVSTR…RGVAVLPFPA (88 aa). Asn429 carries an N-linked (GlcNAc...) asparagine glycan.

Belongs to the peptidase M28 family. M28B subfamily. The cofactor is Zn(2+).

The protein localises to the secreted. The chain is Probable zinc metalloprotease UREG_01421 from Uncinocarpus reesii (strain UAMH 1704).